Consider the following 254-residue polypeptide: Chymotrypsin-like serine proteinase (254 aa).

Positions 1 to 18 are cleaved as a signal peptide; that stretch reads MNALLNILLCTLAATALA. Positions 19-23 are cleaved as a propeptide — activation peptide; the sequence is EISPN. The Peptidase S1 domain maps to 24 to 254; sequence IVGGSNAAAG…SSFYNWVQTQ (231 aa). Cysteine 53 and cysteine 69 are disulfide-bonded. Active-site charge relay system residues include histidine 68 and aspartate 117. 3 disulfides stabilise this stretch: cysteine 146–cysteine 218, cysteine 181–cysteine 199, and cysteine 208–cysteine 233. Serine 212 functions as the Charge relay system in the catalytic mechanism.

The protein belongs to the peptidase S1 family. In terms of assembly, monomer. Expressed specifically in the distal quarter of the intestine.

The protein resides in the secreted. Its subcellular location is the extracellular space. Activated by an autocatalytic mechanism. Specificity similar to chymotrypsin. The chain is Chymotrypsin-like serine proteinase from Haliotis rufescens (California red abalone).